A 238-amino-acid polypeptide reads, in one-letter code: Ubiquinone biosynthesis O-methyltransferase (238 aa).

Residues arginine 38, glycine 58, aspartate 79, and methionine 124 each coordinate S-adenosyl-L-methionine.

The protein belongs to the methyltransferase superfamily. UbiG/COQ3 family.

The catalysed reaction is a 3-demethylubiquinol + S-adenosyl-L-methionine = a ubiquinol + S-adenosyl-L-homocysteine + H(+). It carries out the reaction a 3-(all-trans-polyprenyl)benzene-1,2-diol + S-adenosyl-L-methionine = a 2-methoxy-6-(all-trans-polyprenyl)phenol + S-adenosyl-L-homocysteine + H(+). Its pathway is cofactor biosynthesis; ubiquinone biosynthesis. Its function is as follows. O-methyltransferase that catalyzes the 2 O-methylation steps in the ubiquinone biosynthetic pathway. This chain is Ubiquinone biosynthesis O-methyltransferase, found in Acinetobacter baylyi (strain ATCC 33305 / BD413 / ADP1).